Consider the following 541-residue polypeptide: GMP synthase [glutamine-hydrolyzing] (541 aa).

The region spanning 15–209 (TILTLDFGSQ…AVNICGCKQN (195 aa)) is the Glutamine amidotransferase type-1 domain. The Nucleophile role is filled by Cys91. Residues His183 and Glu185 contribute to the active site. The 207-residue stretch at 210 to 416 (WTMARFVDQE…LGIAHEMVMR (207 aa)) folds into the GMPS ATP-PPase domain. 238–244 (SGGVDST) lines the ATP pocket. Residues Arg311, Asp478, Lys533, and Glu539 each contribute to the XMP site.

Homodimer. Mg(2+) is required as a cofactor.

Its subcellular location is the cytoplasm. It localises to the cytosol. It carries out the reaction XMP + L-glutamine + ATP + H2O = GMP + L-glutamate + AMP + diphosphate + 2 H(+). Its pathway is purine metabolism; GMP biosynthesis; GMP from XMP (L-Gln route): step 1/1. Catalyzes the conversion of xanthine monophosphate (XMP) to GMP in the presence of glutamine and ATP through an adenyl-XMP intermediate. The sequence is that of GMP synthase [glutamine-hydrolyzing] (gua1) from Aspergillus oryzae (strain ATCC 42149 / RIB 40) (Yellow koji mold).